We begin with the raw amino-acid sequence, 250 residues long: UPF0259 membrane protein SG1383 (250 aa).

A run of 6 helical transmembrane segments spans residues 20–40 (FASILLLALLTALISVVLGHA), 86–106 (AGTLAGLVGNVLLAGGLLTMI), 121–141 (IGLSAPLLPRLLLLIFLTTLL), 146–166 (LLLIIVPGILLAIAFSLAPVI), 191–211 (LLAPAVLFWLLAKAAVLLLAT), and 219–239 (LVAVVLLNGLSNLISALLLIY).

Belongs to the UPF0259 family.

The protein localises to the cell inner membrane. In Sodalis glossinidius (strain morsitans), this protein is UPF0259 membrane protein SG1383.